We begin with the raw amino-acid sequence, 255 residues long: Syntaxin-23 (255 aa).

The interval 1–31 (MSFQDLEAGRGRSLASSRNINGGGSRQDTTQ) is disordered. N-acetylserine is present on Ser-2. A compositionally biased stretch (polar residues) spans 14–31 (LASSRNINGGGSRQDTTQ). The region spanning 184-246 (EAVIEEREQG…AQGKSHLVRH (63 aa)) is the t-SNARE coiled-coil homology domain.

The protein belongs to the syntaxin family. As to quaternary structure, part of the t-SNARE complex. Interacts with RGS1. As to expression, expressed at higher levels in leaves, flowers and stems than in roots.

The protein localises to the membrane. Its function is as follows. May function in the docking or fusion of transport vesicles with the prevacuolar membrane. This is Syntaxin-23 (SYP23) from Arabidopsis thaliana (Mouse-ear cress).